The sequence spans 174 residues: UPF0340 protein SH0921 (174 aa).

The protein belongs to the UPF0340 family.

This is UPF0340 protein SH0921 from Staphylococcus haemolyticus (strain JCSC1435).